The chain runs to 437 residues: UDP-N-acetylmuramate--L-alanine ligase (437 aa).

Residue 108 to 114 (GAHGKTS) coordinates ATP.

It belongs to the MurCDEF family.

It is found in the cytoplasm. The catalysed reaction is UDP-N-acetyl-alpha-D-muramate + L-alanine + ATP = UDP-N-acetyl-alpha-D-muramoyl-L-alanine + ADP + phosphate + H(+). It functions in the pathway cell wall biogenesis; peptidoglycan biosynthesis. Cell wall formation. In Staphylococcus aureus, this protein is UDP-N-acetylmuramate--L-alanine ligase.